The chain runs to 197 residues: Endo-1,4-beta-xylanase A (197 aa).

The GH11 domain maps to 1–197; that stretch reads SGTPSSTGTD…SSGTATITVT (197 aa). Glu87 (nucleophile) is an active-site residue. The cysteines at positions 111 and 160 are disulfide-linked. The active-site Proton donor is the Glu184.

Belongs to the glycosyl hydrolase 11 (cellulase G) family.

It is found in the secreted. The catalysed reaction is Endohydrolysis of (1-&gt;4)-beta-D-xylosidic linkages in xylans.. Its pathway is glycan degradation; xylan degradation. Its function is as follows. Hydrolyzes xylans into xylobiose and xylose. This chain is Endo-1,4-beta-xylanase A (XYNA), found in Schizophyllum commune (Split gill fungus).